A 298-amino-acid chain; its full sequence is Plasmodesmata-located protein 7 (298 aa).

A signal peptide spans 1–30; the sequence is MPMAKLRNIIKTLSIFFFLIAATAPSLSSA. Over 31-258 the chain is Extracellular; the sequence is TSATDTFVFG…YKTNYGGEKT (228 aa). Gnk2-homologous domains are found at residues 35–139 and 140–240; these read DTFV…NISF and LGQE…TDGA. Cystine bridges form between cysteine 42–cysteine 117, cysteine 93–cysteine 102, cysteine 105–cysteine 130, cysteine 152–cysteine 218, cysteine 194–cysteine 203, and cysteine 206–cysteine 231. A helical transmembrane segment spans residues 259–279; sequence FAIIIGLLAAVVLLIIFLLFL. The interval 259 to 279 is necessary and sufficient for plasmodesmal targeting; it reads FAIIIGLLAAVVLLIIFLLFL. Residues 280–298 lie on the Cytoplasmic side of the membrane; the sequence is RGVCSRGGDFSILHSFTLI.

It belongs to the cysteine-rich repeat secretory protein family. Plasmodesmata-located proteins (PDLD) subfamily. As to quaternary structure, (Microbial infection) Interacts with Grapevine fanleaf virus (GFLV) 2B-MP. In terms of tissue distribution, highly expressed in lateral root and elongation zone.

Its subcellular location is the cell membrane. The protein localises to the cell junction. It localises to the plasmodesma. Functionally, modulates cell-to-cell trafficking. The polypeptide is Plasmodesmata-located protein 7 (Arabidopsis thaliana (Mouse-ear cress)).